Here is a 293-residue protein sequence, read N- to C-terminus: Probable porphobilinogen deaminase (293 aa).

Position 233 is an S-(dipyrrolylmethanemethyl)cysteine (cysteine 233).

The protein belongs to the HMBS family. The cofactor is dipyrromethane.

The enzyme catalyses 4 porphobilinogen + H2O = hydroxymethylbilane + 4 NH4(+). Its pathway is porphyrin-containing compound metabolism; protoporphyrin-IX biosynthesis; coproporphyrinogen-III from 5-aminolevulinate: step 2/4. Its function is as follows. Tetrapolymerization of the monopyrrole PBG into the hydroxymethylbilane pre-uroporphyrinogen in several discrete steps. In Saccharolobus islandicus (strain M.16.27) (Sulfolobus islandicus), this protein is Probable porphobilinogen deaminase.